The sequence spans 129 residues: Large ribosomal subunit protein bL20 (129 aa).

The span at 1–17 (MARVKRSVNAHKKRRSV) shows a compositional bias: basic residues. Residues 1–29 (MARVKRSVNAHKKRRSVLKASKGYRGQRS) are disordered.

The protein belongs to the bacterial ribosomal protein bL20 family.

Its function is as follows. Binds directly to 23S ribosomal RNA and is necessary for the in vitro assembly process of the 50S ribosomal subunit. It is not involved in the protein synthesizing functions of that subunit. The sequence is that of Large ribosomal subunit protein bL20 from Mycobacterium ulcerans (strain Agy99).